Consider the following 83-residue polypeptide: Colicin-E5 immunity protein in ColE9 (83 aa).

The sequence is that of Colicin-E5 immunity protein in ColE9 from Escherichia coli.